The sequence spans 80 residues: RNA-binding protein Hfq (80 aa).

The Sm domain occupies 7-67; sequence ESFLNTARKK…ITTIVPHERL (61 aa).

The protein belongs to the Hfq family. Homohexamer.

RNA chaperone that binds small regulatory RNA (sRNAs) and mRNAs to facilitate mRNA translational regulation in response to envelope stress, environmental stress and changes in metabolite concentrations. Also binds with high specificity to tRNAs. The chain is RNA-binding protein Hfq from Aquifex aeolicus (strain VF5).